The chain runs to 98 residues: NADH-ubiquinone oxidoreductase chain 4L (98 aa).

The next 3 membrane-spanning stretches (helical) occupy residues 1–21 (MSLV…GLLM), 29–49 (SLLC…IMIL), and 61–81 (IILL…LVMV).

It belongs to the complex I subunit 4L family. Core subunit of respiratory chain NADH dehydrogenase (Complex I) which is composed of 45 different subunits.

The protein resides in the mitochondrion inner membrane. It catalyses the reaction a ubiquinone + NADH + 5 H(+)(in) = a ubiquinol + NAD(+) + 4 H(+)(out). Functionally, core subunit of the mitochondrial membrane respiratory chain NADH dehydrogenase (Complex I) which catalyzes electron transfer from NADH through the respiratory chain, using ubiquinone as an electron acceptor. Part of the enzyme membrane arm which is embedded in the lipid bilayer and involved in proton translocation. The protein is NADH-ubiquinone oxidoreductase chain 4L (MT-ND4L) of Urotrichus talpoides (Japanese shrew mole).